A 292-amino-acid chain; its full sequence is ATP synthase gamma chain (292 aa).

The protein belongs to the ATPase gamma chain family. In terms of assembly, F-type ATPases have 2 components, CF(1) - the catalytic core - and CF(0) - the membrane proton channel. CF(1) has five subunits: alpha(3), beta(3), gamma(1), delta(1), epsilon(1). CF(0) has three main subunits: a, b and c.

Its subcellular location is the cell inner membrane. Functionally, produces ATP from ADP in the presence of a proton gradient across the membrane. The gamma chain is believed to be important in regulating ATPase activity and the flow of protons through the CF(0) complex. This Brucella abortus (strain S19) protein is ATP synthase gamma chain.